A 348-amino-acid chain; its full sequence is Mannonate dehydratase (348 aa).

The protein belongs to the mannonate dehydratase family. Requires Fe(2+) as cofactor. It depends on Mn(2+) as a cofactor.

The enzyme catalyses D-mannonate = 2-dehydro-3-deoxy-D-gluconate + H2O. The protein operates within carbohydrate metabolism; pentose and glucuronate interconversion. Its function is as follows. Catalyzes the dehydration of D-mannonate. The polypeptide is Mannonate dehydratase (Staphylococcus haemolyticus (strain JCSC1435)).